A 379-amino-acid polypeptide reads, in one-letter code: S-adenosylmethionine decarboxylase proenzyme (379 aa).

Residues Glu-30 and Glu-33 contribute to the active site. Catalysis depends on Ser-96, which acts as the Schiff-base intermediate with substrate; via pyruvic acid. At Ser-96 the chain carries Pyruvic acid (Ser); by autocatalysis. Catalysis depends on Cys-110, which acts as the Proton donor; for catalytic activity. Catalysis depends on proton acceptor; for processing activity residues Ser-254 and His-267.

This sequence belongs to the eukaryotic AdoMetDC family. Heterotetramer of two alpha and two beta chains. It depends on pyruvate as a cofactor. Post-translationally, is synthesized initially as an inactive proenzyme. Formation of the active enzyme involves a self-maturation process in which the active site pyruvoyl group is generated from an internal serine residue via an autocatalytic post-translational modification. Two non-identical subunits are generated from the proenzyme in this reaction, and the pyruvate is formed at the N-terminus of the alpha chain, which is derived from the carboxyl end of the proenzyme. The post-translation cleavage follows an unusual pathway, termed non-hydrolytic serinolysis, in which the side chain hydroxyl group of the serine supplies its oxygen atom to form the C-terminus of the beta chain, while the remainder of the serine residue undergoes an oxidative deamination to produce ammonia and the pyruvoyl group blocking the N-terminus of the alpha chain.

It carries out the reaction S-adenosyl-L-methionine + H(+) = S-adenosyl 3-(methylsulfanyl)propylamine + CO2. It functions in the pathway amine and polyamine biosynthesis; S-adenosylmethioninamine biosynthesis; S-adenosylmethioninamine from S-adenosyl-L-methionine: step 1/1. In terms of biological role, S-adenosylmethionine decarboxylase is essential for the biosynthesis of spermine and spermidine. The alpha subunit contains the active site. The protein is S-adenosylmethionine decarboxylase proenzyme (amd1) of Dictyostelium discoideum (Social amoeba).